The primary structure comprises 337 residues: tRNA N6-adenosine threonylcarbamoyltransferase (337 aa).

Fe cation-binding residues include His-111 and His-115. Residues 134–138, Asp-167, Gly-180, and Asn-272 contribute to the substrate site; that span reads LVSGG. A Fe cation-binding site is contributed by Asp-300.

The protein belongs to the KAE1 / TsaD family. It depends on Fe(2+) as a cofactor.

The protein resides in the cytoplasm. It carries out the reaction L-threonylcarbamoyladenylate + adenosine(37) in tRNA = N(6)-L-threonylcarbamoyladenosine(37) in tRNA + AMP + H(+). In terms of biological role, required for the formation of a threonylcarbamoyl group on adenosine at position 37 (t(6)A37) in tRNAs that read codons beginning with adenine. Is involved in the transfer of the threonylcarbamoyl moiety of threonylcarbamoyl-AMP (TC-AMP) to the N6 group of A37, together with TsaE and TsaB. TsaD likely plays a direct catalytic role in this reaction. The chain is tRNA N6-adenosine threonylcarbamoyltransferase from Escherichia coli O139:H28 (strain E24377A / ETEC).